Consider the following 367-residue polypeptide: Aminomethyltransferase (367 aa).

It belongs to the GcvT family. The glycine cleavage system is composed of four proteins: P, T, L and H.

The enzyme catalyses N(6)-[(R)-S(8)-aminomethyldihydrolipoyl]-L-lysyl-[protein] + (6S)-5,6,7,8-tetrahydrofolate = N(6)-[(R)-dihydrolipoyl]-L-lysyl-[protein] + (6R)-5,10-methylene-5,6,7,8-tetrahydrofolate + NH4(+). Functionally, the glycine cleavage system catalyzes the degradation of glycine. The sequence is that of Aminomethyltransferase from Lysinibacillus sphaericus (strain C3-41).